A 153-amino-acid polypeptide reads, in one-letter code: Methylglyoxal synthase (153 aa).

One can recognise an MGS-like domain in the interval 3–153 (DQVNRPKGVT…SYLSRDVPGN (151 aa)). Residues H19, K23, 45–48 (TGTT), and 65–66 (SG) contribute to the substrate site. D71 (proton donor/acceptor) is an active-site residue. Residue H98 participates in substrate binding.

Belongs to the methylglyoxal synthase family.

The catalysed reaction is dihydroxyacetone phosphate = methylglyoxal + phosphate. Functionally, catalyzes the formation of methylglyoxal from dihydroxyacetone phosphate. The chain is Methylglyoxal synthase from Hahella chejuensis (strain KCTC 2396).